Reading from the N-terminus, the 573-residue chain is Sulfite oxidase, mitochondrial (573 aa).

Residues 1 to 34 constitute a mitochondrion transit peptide; sequence MRLLRPSWAGLLRGRHHQHQRHHRRLLLTTSRGS. The span at 14-26 shows a compositional bias: basic residues; it reads GRHHQHQRHHRRL. The tract at residues 14 to 50 is disordered; that stretch reads GRHHQHQRHHRRLLLTTSRGSNGEREEQQHSQWSSPG. The region spanning 108-186 is the Cytochrome b5 heme-binding domain; that stretch reads LPTYRAEEVE…LEGFRIGNLE (79 aa). His144 and His168 together coordinate heme b. The interval 190–199 is hinge; it reads VTNVDDELGS. Positions 200–423 are moco domain; that stretch reads PWSQEPQRHA…DSHWQQNDYK (224 aa). Mo-molybdopterin contacts are provided by residues 240 to 244, Cys287, Asp344, His383, Arg388, and 399 to 401; these read YVRNH and NVK. The tract at residues 424-567 is homodimerization; the sequence is GFSPSTDWDT…RGVLANAYHK (144 aa).

It depends on heme b as a cofactor. Mo-molybdopterin serves as cofactor. In terms of tissue distribution, expressed in the ensheathing glia with relatively weak expression in the CNS cortex (at protein level).

The protein resides in the mitochondrion intermembrane space. It carries out the reaction sulfite + O2 + H2O = sulfate + H2O2. It participates in energy metabolism; sulfur metabolism. In terms of biological role, required in ensheathing glial cells for normal larval locomotion. Oxidizes sulfite which is required to maintain glutamate homeostasis and as a consequence, neuronal network function. The sequence is that of Sulfite oxidase, mitochondrial from Drosophila melanogaster (Fruit fly).